A 154-amino-acid chain; its full sequence is Probable prefoldin subunit 5 (154 aa).

This sequence belongs to the prefoldin subunit alpha family. In terms of assembly, heterohexamer of two PFD-alpha type and four PFD-beta type subunits.

In terms of biological role, binds specifically to cytosolic chaperonin (c-CPN) and transfers target proteins to it. Binds to nascent polypeptide chain and promotes folding in an environment in which there are many competing pathways for nonnative proteins. This chain is Probable prefoldin subunit 5, found in Caenorhabditis briggsae.